Reading from the N-terminus, the 303-residue chain is Sulfotransferase 6B1 (303 aa).

65 to 70 (KCGSNW) serves as a coordination point for 3'-phosphoadenylyl sulfate. The Proton acceptor role is filled by His-118. 3'-phosphoadenylyl sulfate-binding positions include Arg-140, Ser-148, Tyr-203, 237–242 (STFQAM), and 259–261 (RKG).

This sequence belongs to the sulfotransferase 1 family.

Its subcellular location is the cytoplasm. The protein resides in the cytosol. It catalyses the reaction thyroxine + 3'-phosphoadenylyl sulfate = thyroxine sulfate + adenosine 3',5'-bisphosphate + H(+). In terms of biological role, sulfotransferase that utilizes 3'-phospho-5'-adenylyl sulfate (PAPS) as sulfonate donor to catalyze the sulfate conjugation of thyroxine. Involved in the metabolism of thyroxine. The sequence is that of Sulfotransferase 6B1 (SULT6B1) from Gorilla gorilla gorilla (Western lowland gorilla).